The chain runs to 61 residues: Chi-conotoxin MrIA (61 aa).

Residues 1–19 (MRCLPVLIILLLLTASAPG) form the signal peptide. The propeptide occupies 20 to 48 (VVVLPKTEDDVPMSSVYGNGKSILRGILR). Intrachain disulfides connect C52–C61 and C53–C58. P60 is modified (4-hydroxyproline).

This sequence belongs to the conotoxin T superfamily. In terms of tissue distribution, expressed by the venom duct.

Its subcellular location is the secreted. Its function is as follows. Chi-conotoxins inhibit the neuronal noradrenaline transporter (NET/SLC6A2). Activity has been described on both human (inhibition of norepinephrine uptake is IC(50)=1.26 uM) and rat (pIC(50)=6.21 corresponding IC(50)=0.16 uM) transporters. Acts as a reversible non-competitive inhibitor. This is Chi-conotoxin MrIA from Conus marmoreus (Marble cone).